Reading from the N-terminus, the 364-residue chain is PHD finger protein 6 (364 aa).

Ser-2 bears the N-acetylserine mark. Short sequence motifs (nuclear localization signal) lie at residues 13 to 16 and 129 to 133; these read RQRK and RKHKK. Residues 14-52 form a C2HC pre-PHD-type 1 zinc finger; it reads QRKCGFCKSNRDKECGQLLISENQKVAAHHKCMLFSSAL. Positions 14–132 are extended PHD1 domain (ePHD1); that stretch reads QRKCGFCKSN…IYMVYCRKHK (119 aa). The PHD-type 1 zinc-finger motif lies at 80-132; the sequence is LMCSLCHCPGATIGCDVKTCHRTYHYHCALHDKAQIREKPSQGIYMVYCRKHK. A phosphoserine mark is found at Ser-138, Ser-145, and Ser-155. The segment at 139 to 211 is disordered; sequence EADLEESFNE…RSSPNDTRPK (73 aa). The Nucleolar localization signal motif lies at 157–169; that stretch reads KTKKKSRKGRPRK. A compositionally biased stretch (basic residues) spans 157 to 171; sequence KTKKKSRKGRPRKTN. Lys-173 is covalently cross-linked (Glycyl lysine isopeptide (Lys-Gly) (interchain with G-Cter in SUMO2)). Phosphoserine occurs at positions 183 and 199. The C2HC pre-PHD-type 2 zinc finger occupies 209–249; sequence RPKCGFCHVGEEENEARGKLHIFNAKKAAAHYKCMLFSSGT. Residues 209-330 form an extended PHD2 domain (ePHD2) region; it reads RPKCGFCHVG…IYKLYCKNHS (122 aa). Lys-227 participates in a covalent cross-link: Glycyl lysine isopeptide (Lys-Gly) (interchain with G-Cter in SUMO2). The PHD-type 2 zinc finger occupies 278–330; sequence MKCTLCSQPGATIGCEIKACVKTYHYHCGVQDKAKYIENMSRGIYKLYCKNHS. Residues 330 to 364 are disordered; the sequence is SGNDERDEEDEERESKSRGRVAIDQQLTQQQLNGN. Residues 354-364 are compositionally biased toward polar residues; that stretch reads QQLTQQQLNGN. Thr-357 is subject to Phosphothreonine.

As to quaternary structure, interacts with UBTF. Interacts with the NuRD complex component RBBP4 (via the nucleolar localization motif), the interaction mediates transcriptional repression activity. In terms of tissue distribution, at 12.5 dpc it is highly expressed in the embryonic central nervous system and at lower levels in other tissues. Very low levels present throughout the adult brain.

It localises to the nucleus. It is found in the nucleolus. The protein resides in the chromosome. Its subcellular location is the centromere. The protein localises to the kinetochore. In terms of biological role, transcriptional regulator that associates with ribosomal RNA promoters and suppresses ribosomal RNA (rRNA) transcription. The polypeptide is PHD finger protein 6 (Phf6) (Mus musculus (Mouse)).